The primary structure comprises 542 residues: T-complex protein 1 subunit delta (542 aa).

Residues 1 to 16 show a composition bias toward low complexity; sequence MPENVAPRTGPPAGAA. The interval 1 to 31 is disordered; sequence MPENVAPRTGPPAGAAGAAGGRGKSAYQDRD. Arg22 carries the omega-N-methylarginine modification. Lys24 carries the post-translational modification N6-acetyllysine. Residue Ser39 is modified to Phosphoserine. An ADP-binding site is contributed by Gly56. Gly56 is an ATP binding site. Residue Asp107 participates in Mg(2+) binding. Residues Gly108, Thr109, Thr110, Ser111, Asn175, Ser176, and Lys177 each coordinate ADP. 2 residues coordinate ATP: Gly108 and Thr109. Lys177 contacts ATP. Phosphoserine is present on residues Ser187 and Ser205. Residues Lys291, Lys305, Lys322, and Lys329 each carry the N6-acetyllysine modification. Gly428 is a binding site for ADP. Ser447 is subject to Phosphoserine. ADP is bound at residue Gln513.

The protein belongs to the TCP-1 chaperonin family. As to quaternary structure, component of the chaperonin-containing T-complex (TRiC), a hexadecamer composed of two identical back-to-back stacked rings enclosing a protein folding chamber. Each ring is made up of eight different subunits: TCP1/CCT1, CCT2, CCT3, CCT4, CCT5, CCT6A/CCT6, CCT7, CCT8. Interacts with PACRG. Interacts with DNAAF4. Interacts with DLEC1.

The protein resides in the cytoplasm. It is found in the melanosome. The protein localises to the cytoskeleton. Its subcellular location is the microtubule organizing center. It localises to the centrosome. The protein resides in the cilium basal body. The catalysed reaction is ATP + H2O = ADP + phosphate + H(+). In terms of biological role, component of the chaperonin-containing T-complex (TRiC), a molecular chaperone complex that assists the folding of actin, tubulin and other proteins upon ATP hydrolysis. The TRiC complex mediates the folding of WRAP53/TCAB1, thereby regulating telomere maintenance. As part of the TRiC complex may play a role in the assembly of BBSome, a complex involved in ciliogenesis regulating transports vesicles to the cilia. The polypeptide is T-complex protein 1 subunit delta (CCT4) (Bos taurus (Bovine)).